The primary structure comprises 273 residues: MKNELIKIKSILPLQKAPLVHCITNDITLETVANTILYLGGKPIMSSDTREFSSLFQSTDALLLNMGRLNESHEQSLSQASSLADMTKKPTVVDLVGYGITNERTKLGMAMARNHPTVIKGNTSEIRRFVGLPSLAKGIDGASSDQHDQALKDLILSLKQITTEYADTVFVATGKKDVIVQNDKHLILSNGVDELDKFVGTGDMVGAIITTLLAVGEDPWVASQFAISYLNVAAEKALSLTNGMENFRREVLNQIDLLGRNQQWATKIKYSNF.

M45 contributes to the substrate binding site. The ATP site is built by K120 and T173. G200 contributes to the substrate binding site.

This sequence belongs to the Thz kinase family. Requires Mg(2+) as cofactor.

The catalysed reaction is 5-(2-hydroxyethyl)-4-methylthiazole + ATP = 4-methyl-5-(2-phosphooxyethyl)-thiazole + ADP + H(+). Its pathway is cofactor biosynthesis; thiamine diphosphate biosynthesis; 4-methyl-5-(2-phosphoethyl)-thiazole from 5-(2-hydroxyethyl)-4-methylthiazole: step 1/1. Its function is as follows. Catalyzes the phosphorylation of the hydroxyl group of 4-methyl-5-beta-hydroxyethylthiazole (THZ). In Leuconostoc mesenteroides subsp. mesenteroides (strain ATCC 8293 / DSM 20343 / BCRC 11652 / CCM 1803 / JCM 6124 / NCDO 523 / NBRC 100496 / NCIMB 8023 / NCTC 12954 / NRRL B-1118 / 37Y), this protein is Hydroxyethylthiazole kinase 2.